The primary structure comprises 465 residues: CUGBP Elav-like family member 3 (465 aa).

2 RRM domains span residues 7 to 88 (IKLF…PADS) and 95 to 174 (KLFV…FADT). Disordered stretches follow at residues 283–311 (PVPTQPTGQPAPDALYPNGVHPYPAQSPA) and 345–379 (PPALVAQQPPPPPQQQQQQQQQQQQQQQQREGPDG). The segment covering 345–358 (PPALVAQQPPPPPQ) has biased composition (pro residues). Residues 359–373 (QQQQQQQQQQQQQQQ) are compositionally biased toward low complexity. The 79-residue stretch at 380–458 (CNIFIYHLPQ…KRLKVQLKRP (79 aa)) folds into the RRM 3 domain.

This sequence belongs to the CELF/BRUNOL family.

The protein resides in the nucleus. It localises to the cytoplasm. Its function is as follows. RNA-binding protein involved in the regulation of pre-mRNA alternative splicing. Mediates exon inclusion and/or exclusion in pre-mRNA that are subject to tissue-specific and developmentally regulated alternative splicing. Specifically activates exon 5 inclusion of cardiac isoforms of TNNT2 during heart remodeling at the juvenile to adult transition. Activates the splicing of MAPT/Tau exon 10. Binds to muscle-specific splicing enhancer (MSE) intronic sites flanking the alternative exon 5 of TNNT2 pre-mRNA. This is CUGBP Elav-like family member 3 (Celf3) from Mus musculus (Mouse).